A 329-amino-acid polypeptide reads, in one-letter code: UDP-N-acetylenolpyruvoylglucosamine reductase (329 aa).

The FAD-binding PCMH-type domain maps to 28–192 (RVGGPADLLC…ARVEVRLHAG (165 aa)). The active site involves R172. Positions 202-227 (REDRERRRATQPLDRPTFGSTFTNPP) are disordered. S221 serves as the catalytic Proton donor. The active site involves E291. The disordered stretch occupies residues 307 to 329 (DGHAAAGGGPGAASGGVRPPEAT). The span at 311–320 (AAGGGPGAAS) shows a compositional bias: gly residues.

The protein belongs to the MurB family. FAD is required as a cofactor.

It is found in the cytoplasm. It catalyses the reaction UDP-N-acetyl-alpha-D-muramate + NADP(+) = UDP-N-acetyl-3-O-(1-carboxyvinyl)-alpha-D-glucosamine + NADPH + H(+). The protein operates within cell wall biogenesis; peptidoglycan biosynthesis. Cell wall formation. This is UDP-N-acetylenolpyruvoylglucosamine reductase from Anaeromyxobacter sp. (strain K).